The sequence spans 2533 residues: Highly reducing polyketide synthase azaB (2533 aa).

The Ketosynthase family 3 (KS3) domain occupies 7 to 433; sequence TAPMAIIGMA…GSNAHAILES (427 aa). Catalysis depends on for beta-ketoacyl synthase activity residues Cys-180, His-315, and His-355. A malonyl-CoA:ACP transacylase (MAT) domain region spans residues 554 to 821; the sequence is WVFTGQGAQW…VEFESSFRHM (268 aa). Residues 946–1081 form an N-terminal hotdog fold region; sequence SDLVGYSQPS…GRISVITTSD (136 aa). A PKS/mFAS DH domain is found at 946-1254; that stretch reads SDLVGYSQPS…CQSLGRALDR (309 aa). The tract at residues 947–1251 is dehydratase (DH) domain; sequence DLVGYSQPSI…GLTCQSLGRA (305 aa). The active-site Proton acceptor; for dehydratase activity is His-978. The C-terminal hotdog fold stretch occupies residues 1097-1254; it reads YNRRIDPRYM…CQSLGRALDR (158 aa). The active-site Proton donor; for dehydratase activity is the Asp-1163. Positions 1419-1554 are methyltransferase (CMet) domain; sequence TRQVSELVRL…GGKLILMETT (136 aa). The tract at residues 1839 to 2155 is enoyl reductase (ER) domain; that stretch reads GLIDTLVFHD…TGQHMGKIII (317 aa). Residues 2178–2349 form a ketoreductase (KR) domain region; it reads ASYVIVGGLG…AVSLDLGIVR (172 aa). The 78-residue stretch at 2455–2532 folds into the Carrier domain; that stretch reads DAAALICQEL…DLSLRVATKR (78 aa). Ser-2492 is modified (O-(pantetheine 4'-phosphoryl)serine).

The protein operates within secondary metabolite biosynthesis. Highly reducing polyketide synthase; part of the gene cluster that mediates the biosynthesis of azaphilones, a class of fungal metabolites characterized by a highly oxygenated pyrano-quinone bicyclic core and exhibiting a broad range of bioactivities. In the first step, the non-reducing polyketide synthase azaA forms the hexaketide precursor from successive condensations of five malonyl-CoA units, presumably with a simple acetyl-CoA starter unit. The reactive polyketide chain then undergoes a PT-mediated C2-C7 cyclization to afford the aromatic ring and is eventually released as an aldehyde through the R-domain. The putative ketoreductase azaE is proposed to catalyze the reduction of the terminal ketone resulting in the early culture product FK17-P2a. The monooxygenase azaH was demonstrated to be the only enzyme required to convert FK17-P2a to azanigerone E. AzaH first hydroxylates the benzaldehyde intermediate FK17-P2a at C4, which triggers the formation of the pyran-ring to afford azanigerone E. In parallel, the 2,4-dimethylhexanoyl chain is synthesized by the HR-PKS azaB and is proposed to be transferred to the C4-hydroxyl of azanigerone E by the acyltransferase azaD directly from the ACP domain of azaB. Alternatively, the 2,4-dimethyl-hexanoyl chain may be offloaded from the HR-PKS as a carboxylic acid and converted to an acyl-CoA by azaF. The resulting acyl-CoA molecule could then be taken up as a substrate by AzaD to form azanigerone B. To yield the carboxylic acid substituent in azanigerone A, the hydroxypropyl side chain of azanigerone B would need to undergo a C-C oxidative cleavage catalyzed by cytochrome P450 AzaI. AzaI is proposed to act on a vicinal diol that leads to a C-C bond scission either through an alkoxyradical intermediate or a peroxy complex. In the biosynthesis of azanigerone A, azanigerone B first undergoes hydroxylation at C10, possibly catalyzed by one of the two FAD-dependent monooxygenases encoded in the cluster, azaG or azaL, resulting in the vicinal diol azanigerone C. Oxidative cleavage of azanigerone C by azaI would yield the corresponding aldehyde derivative of azanigerone A. Finally, the dehydrogenase azaJ is proposed to convert the aldehyde functional group into the carboxylic acid, completing the conversion from azanigerone B to azanigerone A. Alternatively, the oxidation of aldehyde to carboxylic acid may be catalyzed by the same P450 enzyme azaI via consecutive oxidation or by endogenous alcohol dehydrogenase. The chain is Highly reducing polyketide synthase azaB from Aspergillus niger (strain ATCC 1015 / CBS 113.46 / FGSC A1144 / LSHB Ac4 / NCTC 3858a / NRRL 328 / USDA 3528.7).